Here is a 154-residue protein sequence, read N- to C-terminus: Sec-independent protein translocase protein TatB (154 aa).

The helical transmembrane segment at 1 to 21 (MIDIGITKLAIIGGIALIVIG) threads the bilayer.

It belongs to the TatB family. As to quaternary structure, the Tat system comprises two distinct complexes: a TatABC complex, containing multiple copies of TatA, TatB and TatC subunits, and a separate TatA complex, containing only TatA subunits. Substrates initially bind to the TatABC complex, which probably triggers association of the separate TatA complex to form the active translocon.

The protein resides in the cell inner membrane. Functionally, part of the twin-arginine translocation (Tat) system that transports large folded proteins containing a characteristic twin-arginine motif in their signal peptide across membranes. Together with TatC, TatB is part of a receptor directly interacting with Tat signal peptides. TatB may form an oligomeric binding site that transiently accommodates folded Tat precursor proteins before their translocation. The sequence is that of Sec-independent protein translocase protein TatB from Albidiferax ferrireducens (strain ATCC BAA-621 / DSM 15236 / T118) (Rhodoferax ferrireducens).